The chain runs to 509 residues: ATP synthase subunit alpha (509 aa).

169-176 (GDRQTGKT) contributes to the ATP binding site.

The protein belongs to the ATPase alpha/beta chains family. As to quaternary structure, F-type ATPases have 2 components, CF(1) - the catalytic core - and CF(0) - the membrane proton channel. CF(1) has five subunits: alpha(3), beta(3), gamma(1), delta(1), epsilon(1). CF(0) has four main subunits: a(1), b(1), b'(1) and c(9-12).

The protein localises to the cellular chromatophore membrane. The enzyme catalyses ATP + H2O + 4 H(+)(in) = ADP + phosphate + 5 H(+)(out). In terms of biological role, produces ATP from ADP in the presence of a proton gradient across the membrane. The alpha chain is a regulatory subunit. The polypeptide is ATP synthase subunit alpha (Rhodobacter capsulatus (Rhodopseudomonas capsulata)).